The chain runs to 406 residues: Probable 26S proteasome regulatory subunit 10B (406 aa).

191 to 198 (GPPGTGKT) serves as a coordination point for ATP.

Belongs to the AAA ATPase family.

It is found in the cytoplasm. The protein localises to the nucleus. Its function is as follows. The 26S proteasome is involved in the ATP-dependent degradation of ubiquitinated proteins. The regulatory (or ATPase) complex confers ATP dependency and substrate specificity to the 26S complex. In Caenorhabditis elegans, this protein is Probable 26S proteasome regulatory subunit 10B (rpt-4).